Reading from the N-terminus, the 158-residue chain is NAD(P)H-quinone oxidoreductase subunit J, chloroplastic (158 aa).

It belongs to the complex I 30 kDa subunit family. NDH is composed of at least 16 different subunits, 5 of which are encoded in the nucleus.

It is found in the plastid. The protein resides in the chloroplast thylakoid membrane. The catalysed reaction is a plastoquinone + NADH + (n+1) H(+)(in) = a plastoquinol + NAD(+) + n H(+)(out). It catalyses the reaction a plastoquinone + NADPH + (n+1) H(+)(in) = a plastoquinol + NADP(+) + n H(+)(out). Functionally, NDH shuttles electrons from NAD(P)H:plastoquinone, via FMN and iron-sulfur (Fe-S) centers, to quinones in the photosynthetic chain and possibly in a chloroplast respiratory chain. The immediate electron acceptor for the enzyme in this species is believed to be plastoquinone. Couples the redox reaction to proton translocation, and thus conserves the redox energy in a proton gradient. The protein is NAD(P)H-quinone oxidoreductase subunit J, chloroplastic of Ceratophyllum demersum (Rigid hornwort).